Here is a 197-residue protein sequence, read N- to C-terminus: GTP cyclohydrolase-2 (197 aa).

Residue 50–54 (RIHSE) participates in GTP binding. 3 residues coordinate Zn(2+): C55, C66, and C68. Residues Q71, 93 to 95 (EGR), and T115 contribute to the GTP site. D127 (proton acceptor) is an active-site residue. R129 (nucleophile) is an active-site residue. GTP is bound by residues T150 and K155.

Belongs to the GTP cyclohydrolase II family. Zn(2+) is required as a cofactor.

It catalyses the reaction GTP + 4 H2O = 2,5-diamino-6-hydroxy-4-(5-phosphoribosylamino)-pyrimidine + formate + 2 phosphate + 3 H(+). It functions in the pathway cofactor biosynthesis; riboflavin biosynthesis; 5-amino-6-(D-ribitylamino)uracil from GTP: step 1/4. Its function is as follows. Catalyzes the conversion of GTP to 2,5-diamino-6-ribosylamino-4(3H)-pyrimidinone 5'-phosphate (DARP), formate and pyrophosphate. This chain is GTP cyclohydrolase-2, found in Tolumonas auensis (strain DSM 9187 / NBRC 110442 / TA 4).